A 648-amino-acid chain; its full sequence is ABC transporter G family member 14 (648 aa).

The ABC transporter domain occupies 53–304 (LKFEEVVYKV…FSSLGFSTSL (252 aa)). ATP is bound at residue 99–106 (GPSGSGKT). An N-linked (GlcNAc...) asparagine glycan is attached at asparagine 346. The region spanning 384–590 (YQFTVLLQRG…CYKLLLGIQY (207 aa)) is the ABC transmembrane type-2 domain. 7 consecutive transmembrane segments (helical) span residues 405–425 (LRIF…WHTP), 435–455 (LLFF…VFTF), 485–505 (LPLE…MGGL), 512–532 (FILS…LGLA), 543–562 (ATTL…GYYV), 569–591 (IVWL…IQYT), and 620–640 (LWID…MAYM).

It belongs to the ABC transporter superfamily. ABCG family. Eye pigment precursor importer (TC 3.A.1.204) subfamily. In terms of assembly, forms heterodimers with ABCG11. In terms of tissue distribution, accumulates primarily in the pericycle and stelar cells of roots. Expressed in leaves, stems, flowers and siliques, and, at low levels, in roots. Accumulates in the phloem.

The protein localises to the cell membrane. Its function is as follows. Positive regulator of plant growth which acts as an efflux pump involved in the major root-to-shoot (acropetal) long-distance cytokinin (CK) transport via the xylem sap. Together with ABCG9 and ABCG11, required for vascular development by regulating lipid/sterol homeostasis. Involved in CK-dependent responses to oxidative stress such as hydrogen peroxide H(2)O(2). In terms of biological role, (Microbial infection) Required for SNC1-mediated defense response against the virulent pathogen Pseudomonas syringae pv. tomato DC3000 by promoting the accumulation of trans-zeatin (tZ)-type cytokinins (CK) in the shoot. The sequence is that of ABC transporter G family member 14 from Arabidopsis thaliana (Mouse-ear cress).